Here is a 277-residue protein sequence, read N- to C-terminus: Glutamate racemase (277 aa).

Substrate contacts are provided by residues 25–26 and 57–58; these read DS and YG. Cys-89 (proton donor/acceptor) is an active-site residue. 90 to 91 serves as a coordination point for substrate; the sequence is NT. The Proton donor/acceptor role is filled by Cys-204. 205–206 contacts substrate; that stretch reads TH.

It belongs to the aspartate/glutamate racemases family.

The catalysed reaction is L-glutamate = D-glutamate. It functions in the pathway cell wall biogenesis; peptidoglycan biosynthesis. Its function is as follows. Provides the (R)-glutamate required for cell wall biosynthesis. This is Glutamate racemase from Brucella abortus (strain 2308).